The sequence spans 633 residues: Basic helix-loop-helix ARNT-like protein 1 (633 aa).

The disordered stretch occupies residues 1–65; that stretch reads MADQRMDISS…GMDTDKDDQH (65 aa). Phosphoserine; by GSK3-beta is present on Ser-17. The segment covering 24-33 has biased composition (polar residues); that stretch reads ISSSLSTSGV. Residues 36–41 carry the Nuclear localization signal motif; it reads NRKRKG. A bHLH domain is found at 79 to 132; that stretch reads NAREAHSQIEKRRRDKMNSFIDELASLVPTCNAMSRKLDKLTVLRMAVQHMKTL. Position 85 is a phosphoserine (Ser-85). Ser-97 carries the phosphoserine; by CK2 modification. A Nuclear export signal 1 motif is present at residues 149–159; it reads LSDDELKHLIL. Residues 150–222 form the PAS 1 domain; that stretch reads SDDELKHLIL…EQLSSSDTAP (73 aa). Residue Lys-259 forms a Glycyl lysine isopeptide (Lys-Gly) (interchain with G-Cter in SUMO2 and SUMO3) linkage. A Glycyl lysine isopeptide (Lys-Gly) (interchain with G-Cter in SUMO) cross-link involves residue Lys-266. The PAS 2 domain maps to 333–403; that stretch reads PQPVNGEIRV…ECHRQVLQTR (71 aa). The Nuclear export signal 2 motif lies at 368–376; the sequence is LAYLPQELL. In terms of domain architecture, PAC spans 408–451; that stretch reads TNCYKFKIKDGSFITLRSRWFSFMNPWTKEVEYIVSTNTVVSTS. Disordered regions lie at residues 469–499 and 518–578; these read SMDSVLQAGEGGPKRSHPTVPGIPGGTRAGA and GSSP…DNSS. Low complexity predominate over residues 518–528; sequence GSSPSSCGSSP. Lys-545 bears the N6-acetyllysine mark. The segment covering 563 to 578 has biased composition (polar residues); the sequence is GQIQDSSGYPYSDNSS.

In terms of assembly, component of the circadian clock oscillator which includes the CRY1/2 proteins, CLOCK or NPAS2, BMAL1 or BMAL2, CSNK1D and/or CSNK1E, TIMELESS and the PER1/2/3 proteins. Forms a heterodimer with CLOCK. The CLOCK-BMAL1 heterodimer is required for E-box-dependent transactivation, for CLOCK nuclear translocation and degradation, and, for phosphorylation of both CLOCK and BMAL1. Interacts with PER1, PER2, CRY1 and CRY2 and this interaction requires a translocation to the nucleus. Interaction of the CLOCK-BMAL1 heterodimer with PER or CRY inhibits transcription activation. Interacts with NPAS2. Post-translationally, ubiquitinated, leading to its proteasomal degradation. Deubiquitinated by USP9X. O-glycosylated; contains O-GlcNAc. O-glycosylation by OGT prevents protein degradation by inhibiting ubiquitination. It also stabilizes the CLOCK-BMAL1 heterodimer thereby increasing CLOCK-BMAL1-mediated transcription of genes in the negative loop of the circadian clock such as PER1/2/3 and CRY1/2. In terms of processing, acetylated on Lys-545 by CLOCK during the repression phase of the circadian cycle. Acetylation facilitates recruitment of CRY1 protein and initiates the repression phase of the circadian cycle. Acetylated at Lys-545 by KAT5 during the activation phase of the cycle, leading to recruitment of the positive transcription elongation factor b (P-TEFb) and BRD4, followed by productive elongation of circadian transcripts. Deacetylated by SIRT1, which may result in decreased protein stability. Post-translationally, phosphorylated upon dimerization with CLOCK. Phosphorylation enhances the transcriptional activity, alters the subcellular localization and decreases the stability of the CLOCK-BMAL1 heterodimer by promoting its degradation. Phosphorylation shows circadian variations in the liver with a peak between CT10 to CT14. Phosphorylation at Ser-97 by CK2 is essential for its nuclear localization, its interaction with CLOCK and controls CLOCK nuclear entry. Dephosphorylation at Ser-85 is important for dimerization with CLOCK and transcriptional activity. Sumoylated on Lys-266 upon dimerization with CLOCK. Predominantly conjugated to poly-SUMO2/3 rather than SUMO1 and the level of these conjugates undergo rhythmic variation, peaking at CT9-CT12. Sumoylation localizes it exclusively to the PML body and promotes its ubiquitination in the PML body, ubiquitin-dependent proteasomal degradation and the transcriptional activity of the CLOCK-BMAL1 heterodimer. In terms of processing, undergoes lysosome-mediated degradation in a time-dependent manner in the liver. As to expression, expressed in pineal gland and retina.

Its subcellular location is the nucleus. The protein localises to the cytoplasm. The protein resides in the PML body. Its function is as follows. Transcriptional activator which forms a core component of the circadian clock. The circadian clock, an internal time-keeping system, regulates various physiological processes through the generation of approximately 24 hour circadian rhythms in gene expression, which are translated into rhythms in metabolism and behavior. It is derived from the Latin roots 'circa' (about) and 'diem' (day) and acts as an important regulator of a wide array of physiological functions including metabolism, sleep, body temperature, blood pressure, endocrine, immune, cardiovascular, and renal function. Consists of two major components: the central clock, residing in the suprachiasmatic nucleus (SCN) of the brain, and the peripheral clocks that are present in nearly every tissue and organ system. Both the central and peripheral clocks can be reset by environmental cues, also known as Zeitgebers (German for 'timegivers'). The predominant Zeitgeber for the central clock is light, which is sensed by retina and signals directly to the SCN. The central clock entrains the peripheral clocks through neuronal and hormonal signals, body temperature and feeding-related cues, aligning all clocks with the external light/dark cycle. Circadian rhythms allow an organism to achieve temporal homeostasis with its environment at the molecular level by regulating gene expression to create a peak of protein expression once every 24 hours to control when a particular physiological process is most active with respect to the solar day. Transcription and translation of core clock components (CLOCK, NPAS2, BMAL1, BMAL2, PER1, PER2, PER3, CRY1 and CRY2) plays a critical role in rhythm generation, whereas delays imposed by post-translational modifications (PTMs) are important for determining the period (tau) of the rhythms (tau refers to the period of a rhythm and is the length, in time, of one complete cycle). A diurnal rhythm is synchronized with the day/night cycle, while the ultradian and infradian rhythms have a period shorter and longer than 24 hours, respectively. Disruptions in the circadian rhythms contribute to the pathology of cardiovascular diseases, cancer, metabolic syndromes and aging. A transcription/translation feedback loop (TTFL) forms the core of the molecular circadian clock mechanism. Transcription factors, CLOCK or NPAS2 and BMAL1 or BMAL2, form the positive limb of the feedback loop, act in the form of a heterodimer and activate the transcription of core clock genes and clock-controlled genes (involved in key metabolic processes), harboring E-box elements (5'-CACGTG-3') within their promoters. The core clock genes: PER1/2/3 and CRY1/2 which are transcriptional repressors form the negative limb of the feedback loop and interact with the CLOCK|NPAS2-BMAL1|BMAL2 heterodimer inhibiting its activity and thereby negatively regulating their own expression. This heterodimer also activates nuclear receptors NR1D1/2 and RORA/B/G, which form a second feedback loop and which activate and repress BMAL1 transcription, respectively. The preferred binding motif for the CLOCK-BMAL1 heterodimer is 5'-CACGTGA-3', which contains a flanking adenine nucleotide at the 3-prime end of the canonical 6-nucleotide E-box sequence. CLOCK specifically binds to the half-site 5'-CAC-3', while BMAL1 binds to the half-site 5'-GTGA-3'. Essential for the rhythmic interaction of CLOCK with ASS1 and plays a critical role in positively regulating CLOCK-mediated acetylation of ASS1. Plays a role in protecting against lethal sepsis by limiting the expression of immune checkpoint protein CD274 in macrophages in a PKM2-dependent manner. The polypeptide is Basic helix-loop-helix ARNT-like protein 1 (BMAL1) (Gallus gallus (Chicken)).